We begin with the raw amino-acid sequence, 723 residues long: Tryptophan 2-monooxygenase (723 aa).

The FMN site is built by Ser-218, Glu-238, Arg-246, and Arg-266. Position 266 (Arg-266) interacts with substrate.

This sequence belongs to the tryptophan 2-monooxygenase family. The cofactor is FMN.

It catalyses the reaction L-tryptophan + O2 = indole-3-acetamide + CO2 + H2O. It functions in the pathway plant hormone metabolism; auxin biosynthesis. This chain is Tryptophan 2-monooxygenase (iaaM), found in Allorhizobium ampelinum (strain ATCC BAA-846 / DSM 112012 / S4) (Agrobacterium vitis (strain S4)).